The following is a 257-amino-acid chain: Low affinity immunoglobulin gamma Fc region receptor III-A (257 aa).

The first 19 residues, 1–19 (MWQLLSPTALLLLVSVPGT), serve as a signal peptide directing secretion. At 20 to 209 (HAEDPPKSVV…ILSFFLPWHQ (190 aa)) the chain is on the extracellular side. Ig-like C2-type domains follow at residues 25 to 104 (PKSV…LRLE) and 108 to 190 (GWLL…VKVT). 2 disulfide bridges follow: C48–C90 and C129–C173. N-linked (GlcNAc...) asparagine glycans are attached at residues N64, N134, and N162. The N-linked (GlcNAc...) asparagine; in variant N-181 glycan is linked to D181. A helical membrane pass occupies residues 210-230 (IIFCLVMGFLFAVDTGLYFSV). Topologically, residues 231–257 (RKVLRSSKEDWRNGKVTWSRDPADKGG) are cytoplasmic.

As to quaternary structure, forms a heterooligomeric complex with ITAM-containing signaling subunits FCER1G. Interacts (via transmembrane domain) with signaling subunits; this interaction is a prerequisite for receptor complex expression on the cell surface and intracellular signal transduction. Binds the Fc region of antigen-complexed IgG. Expressed in polymorphonuclear leukocytes, pulmonary alveolar macrophages and peripheral blood mononuclear cells (at protein level). Found in spleen, and at very low levels in lymph nodes but not in thymus or liver.

The protein resides in the cell membrane. Receptor for the invariable Fc fragment of immunoglobulin gamma (IgG). Optimally activated upon binding of clustered antigen-IgG complexes displayed on cell surfaces, triggers lysis of antibody-coated cells, a process known as antibody-dependent cellular cytotoxicity (ADCC). Does not bind free monomeric IgG, thus avoiding inappropriate effector cell activation in the absence of antigenic trigger. Mediates IgG effector functions on natural killer (NK) cells. Binds antigen-IgG complexes generated upon infection and triggers NK cell-dependent cytokine production and degranulation to limit viral load and propagation. Fc-binding subunit that associates with FCER1G adapter to form functional signaling complexes. Following the engagement of antigen-IgG complexes, triggers phosphorylation of immunoreceptor tyrosine-based activation motif (ITAM)-containing adapter with subsequent activation of phosphatidylinositol 3-kinase signaling and sustained elevation of intracellular calcium that ultimately drive NK cell activation. Mediates enhanced ADCC in response to afucosylated IgGs. The sequence is that of Low affinity immunoglobulin gamma Fc region receptor III-A from Sus scrofa (Pig).